We begin with the raw amino-acid sequence, 176 residues long: T cell receptor beta constant 1 (176 aa).

Residues Pro-8 to Thr-117 enclose the Ig-like C1-type domain. A disulfide bond links Cys-30 and Cys-95. Asn-69 carries N-linked (GlcNAc...) asparagine glycosylation. The tract at residues Cys-130–Ala-144 is connecting peptide. A helical transmembrane segment spans residues Ile-150 to Met-170. The Cytoplasmic portion of the chain corresponds to Val-171 to Phe-176.

In terms of assembly, alpha-beta TR is a heterodimer composed of an alpha and beta chain; disulfide-linked. The alpha-beta TR is associated with the transmembrane signaling CD3 coreceptor proteins to form the TR-CD3 (TcR or TCR). The assembly of alpha-beta TR heterodimers with CD3 occurs in the endoplasmic reticulum where a single alpha-beta TR heterodimer associates with one CD3D-CD3E heterodimer, one CD3G-CD3E heterodimer and one CD247 homodimer forming a stable octameric structure. CD3D-CD3E and CD3G-CD3E heterodimers preferentially associate with TR alpha and TR beta chains, respectively. The association of the CD247 homodimer is the last step of TcR assembly in the endoplasmic reticulum and is required for transport to the cell surface.

It is found in the cell membrane. Its function is as follows. Constant region of T cell receptor (TR) beta chain. Alpha-beta T cell receptors are antigen specific receptors which are essential to the immune response and are present on the cell surface of T lymphocytes. Recognize peptide-major histocompatibility (MH) (pMH) complexes that are displayed by antigen presenting cells (APC), a prerequisite for efficient T cell adaptive immunity against pathogens. Binding of alpha-beta TR to pMH complex initiates TR-CD3 clustering on the cell surface and intracellular activation of LCK that phosphorylates the ITAM motifs of CD3G, CD3D, CD3E and CD247 enabling the recruitment of ZAP70. In turn, ZAP70 phosphorylates LAT, which recruits numerous signaling molecules to form the LAT signalosome. The LAT signalosome propagates signal branching to three major signaling pathways, the calcium, the mitogen-activated protein kinase (MAPK) kinase and the nuclear factor NF-kappa-B (NF-kB) pathways, leading to the mobilization of transcription factors that are critical for gene expression and essential for T cell growth and differentiation. The T cell repertoire is generated in the thymus, by V-(D)-J rearrangement. This repertoire is then shaped by intrathymic selection events to generate a peripheral T cell pool of self-MH restricted, non-autoaggressive T cells. Post-thymic interaction of alpha-beta TR with the pMH complexes shapes TR structural and functional avidity. This chain is T cell receptor beta constant 1, found in Homo sapiens (Human).